We begin with the raw amino-acid sequence, 139 residues long: ATP synthase epsilon chain (139 aa).

Belongs to the ATPase epsilon chain family. As to quaternary structure, F-type ATPases have 2 components, CF(1) - the catalytic core - and CF(0) - the membrane proton channel. CF(1) has five subunits: alpha(3), beta(3), gamma(1), delta(1), epsilon(1). CF(0) has three main subunits: a, b and c.

It localises to the cell inner membrane. In terms of biological role, produces ATP from ADP in the presence of a proton gradient across the membrane. The polypeptide is ATP synthase epsilon chain (Nitrosospira multiformis (strain ATCC 25196 / NCIMB 11849 / C 71)).